A 98-amino-acid chain; its full sequence is uncharacterized protein (98 aa).

The protein belongs to the Rv1128c/1148c/1588c/1702c/1945/3466 family.

This is an uncharacterized protein from Mycobacterium tuberculosis (strain ATCC 25618 / H37Rv).